A 61-amino-acid polypeptide reads, in one-letter code: Small ribosomal subunit protein uS14 (61 aa).

Positions 24, 27, 40, and 43 each coordinate Zn(2+).

This sequence belongs to the universal ribosomal protein uS14 family. Zinc-binding uS14 subfamily. In terms of assembly, part of the 30S ribosomal subunit. Contacts proteins S3 and S10. The cofactor is Zn(2+).

Functionally, binds 16S rRNA, required for the assembly of 30S particles and may also be responsible for determining the conformation of the 16S rRNA at the A site. This Rhodopirellula baltica (strain DSM 10527 / NCIMB 13988 / SH1) protein is Small ribosomal subunit protein uS14.